Here is a 259-residue protein sequence, read N- to C-terminus: Ribonuclease PH (259 aa).

Residues Arg88 and 126–128 each bind phosphate; that span reads GTR.

This sequence belongs to the RNase PH family. In terms of assembly, homohexameric ring arranged as a trimer of dimers.

It carries out the reaction tRNA(n+1) + phosphate = tRNA(n) + a ribonucleoside 5'-diphosphate. Functionally, phosphorolytic 3'-5' exoribonuclease that plays an important role in tRNA 3'-end maturation. Removes nucleotide residues following the 3'-CCA terminus of tRNAs; can also add nucleotides to the ends of RNA molecules by using nucleoside diphosphates as substrates, but this may not be physiologically important. Probably plays a role in initiation of 16S rRNA degradation (leading to ribosome degradation) during starvation. In Mycobacterium bovis (strain ATCC BAA-935 / AF2122/97), this protein is Ribonuclease PH.